The chain runs to 538 residues: MKTSEERLVVPDSLSSDQAPAPVPQGSPVDENTDSEPVPQPCGGDDRSQVAADSVAGSVVFQEPQQGHPLPLSAPLEVEFNTPGELSPRIEEQELSENVSLPVEDTNQPELASGEDVEGVSEEPGPVDEGDAFWSYNFSQVPRYLSGSWSEFRAHSENFLKGCKWAPDGSCILTNSADNTLRIYNLPPELYSATEQVDYAEMVPVLRMVEGDTIYDYCWYSLMSSSQPDTSYVASSSRENPIHIWDAFTGELRASFRAYNHLDELTAAHSLCFSPDGSQLFCGFNRTVRVFSTSRPGRDCEVRATFAKKQGQSGIISCIAFSPSQPLYACGSYGRTLGLYAWDDGSPLALLGGHQGGITHLCFHPDGNLFFSGARKDAELLCWDLRQPGHLLWSLSREVTTNQRIYFDLDPSGQFLVSGNTNGMVSVWDISGAFGDSSKLGPVMTFLPQKDCTNGVSLHPSLPLLATASGQRMFPEPTNSGDEGEPEGDLPLLSLCHAHPEWQLQLWWCGGGPDPSSPNDPQDEKGQGRAEGCGDGLI.

The tract at residues Met1–Asp53 is disordered. A phosphoserine mark is found at Ser27 and Ser87. A disordered region spans residues Glu92–Asp128. Positions Ser113–Asp128 are enriched in acidic residues. WD repeat units follow at residues Ala154–Thr194, Glu210–Ser255, Asn260–Glu301, Gly311–Gly352, Gly353–Trp393, and Val399–Ser438. 2 disordered regions span residues Gln471–Pro491 and Cys509–Ile538. Thr478 carries the post-translational modification Phosphothreonine. Ser480 carries the post-translational modification Phosphoserine. Positions Arg529–Ile538 are enriched in gly residues.

The protein belongs to the TCAB1 family. Component of the telomerase holoenzyme complex composed of one molecule of TERT, one molecule of WRAP53/TCAB1, two molecules of H/ACA ribonucleoprotein complex subunits DKC1, NOP10, NHP2 and GAR1, and a telomerase RNA template component (TERC). The telomerase holoenzyme complex is associated with TEP1, SMG6/EST1A and POT1. Interacts with the chaperonin-containing T-complex (TRiC) complex; which mediates the folding of WRAP53/TCAB1. Interacts with COIL. Interacts with SMN1. Interacts with RNF8. Interacts with histone H2AX. Preferentially expressed in testis.

It localises to the nucleus. Its subcellular location is the cajal body. The protein localises to the chromosome. The protein resides in the telomere. In terms of biological role, RNA chaperone that plays a key role in telomere maintenance and RNA localization to Cajal bodies. Specifically recognizes and binds the Cajal body box (CAB box) present in both small Cajal body RNAs (scaRNAs) and telomerase RNA template component (TERC). Essential component of the telomerase holoenzyme complex, a ribonucleoprotein complex essential for the replication of chromosome termini that elongates telomeres in most eukaryotes. In the telomerase holoenzyme complex, required to stimulate the catalytic activity of the complex. Acts by specifically binding the CAB box of the TERC RNA and controlling the folding of the CR4/CR5 region of the TERC RNA, a critical step for telomerase activity. In addition, also controls telomerase holoenzyme complex localization to Cajal body. During S phase, required for delivery of TERC to telomeres during S phase and for telomerase activity. In addition to its role in telomere maintenance, also required for Cajal body formation, probably by mediating localization of scaRNAs to Cajal bodies. Also plays a role in DNA repair: relocalizes to sites of DNA double-strand breaks in response to DNA damage and promotes the repair of DNA double-strand breaks. Acts by recruiting the ubiquitin ligase RNF8 to DNA breaks and promote both homologous recombination (HR) and non-homologous end joining (NHEJ). The polypeptide is Telomerase Cajal body protein 1 (Mesocricetus auratus (Golden hamster)).